Reading from the N-terminus, the 5654-residue chain is Mucin-5AC (5654 aa).

The N-terminal stretch at 1-27 (MSVGRRKLALLWALALALACTRHTGHA) is a signal peptide. The disordered stretch occupies residues 27 to 49 (AQDGSSESSYKHHPALSPIARGP). Residues 79–249 (RVCSTWGSFH…KMDDPTDQCQ (171 aa)) form the VWFD 1 domain. Disulfide bonds link cysteine 81–cysteine 211 and cysteine 103–cysteine 248. A Cu(2+)-binding site is contributed by glutamate 198. N-linked (GlcNAc...) asparagine glycosylation is found at asparagine 205 and asparagine 258. Cu(2+) is bound by residues histidine 320 and histidine 367. The region spanning 338–394 (CPNNMQYHECRSPCADTCSNQEHSRACEDHCVAGCFCPEGTVLDDIGQTGCVPVSKC) is the TIL 1 domain. The 72-residue stretch at 394–465 (CACVYNGAAY…CSYVLTKPCD (72 aa)) folds into the VWFC 1 domain. A glycan (N-linked (GlcNAc...) asparagine) is linked at asparagine 415. Residues 432–607 (GTCSVLGGAH…NTFKTQAACP (176 aa)) enclose the VWFD 2 domain. Intrachain disulfides connect cysteine 434–cysteine 571, cysteine 456–cysteine 606, and cysteine 478–cysteine 486. N-linked (GlcNAc...) asparagine glycosylation occurs at asparagine 524. 2 TIL domains span residues 704–761 (CPKS…ASNC) and 818–863 (DTGA…AEDC). Positions 901-1072 (ATCAVYGDGH…NSWKLSPSCP (172 aa)) constitute a VWFD 3 domain. 4 cysteine pairs are disulfide-bonded: cysteine 903-cysteine 1036, cysteine 925-cysteine 1071, cysteine 934-cysteine 1033, and cysteine 953-cysteine 960. N-linked (GlcNAc...) asparagine glycosylation is present at asparagine 1308. Residues 1336–1377 (LVVSSTHTPSNGPSSAHTGPPSSAWPTTAGTSPRTRLPTASA) form a disordered region. Polar residues predominate over residues 1338–1377 (VSSTHTPSNGPSSAHTGPPSSAWPTTAGTSPRTRLPTASA). One copy of the Cys-rich subdomain 1 repeat lies at 1383–1481 (CGEKCLWSPW…RVQCCTPLPC (99 aa)). The segment at 1383-4731 (CGEKCLWSPW…VLCCETPRGC (3349 aa)) is 9 X Cys-rich subdomain repeats. C-linked (Man) tryptophan glycosylation is present at tryptophan 1389. 2 stretches are compositionally biased toward low complexity: residues 1483–1539 (TSSS…TFST) and 1547–1575 (ATSTSSMSTTAPGTSVVSSKPTPTEPSTS). Residues 1483–1575 (TSSSPAQTTP…KPTPTEPSTS (93 aa)) form a disordered region. One copy of the Cys-rich subdomain 2 repeat lies at 1577-1677 (CLQELCTWTE…IQCCETVNVC (101 aa)). The C-linked (Man) tryptophan glycan is linked to tryptophan 1584. The interval 1688–1733 (ATTRPTPHPTGAQTQTTFTTHMPSASTEQPTATSRGGPTATSVTQG) is disordered. The span at 1697–1707 (TGAQTQTTFTT) shows a compositional bias: low complexity. The segment covering 1708 to 1733 (HMPSASTEQPTATSRGGPTATSVTQG) has biased composition (polar residues). The Cys-rich subdomain 3 repeat unit spans residues 1743–1847 (CHPRCTWTKW…VLCCETPRGC (105 aa)). A C-linked (Man) tryptophan glycan is attached at tryptophan 1749. The segment at 1849–1948 (MTSTPGSTSS…KPTPTEPSTS (100 aa)) is disordered. Composition is skewed to low complexity over residues 1850–1912 (TSTP…TFST) and 1920–1948 (ATSTSSMSTTAPGTSVVSSKPTPTEPSTS). One copy of the Cys-rich subdomain 4 repeat lies at 1950-2050 (CLQELCTWTE…IQCCETVNVC (101 aa)). The C-linked (Man) tryptophan glycan is linked to tryptophan 1957. The disordered stretch occupies residues 2059-2110 (TVATTRPTPHPTGAQTQTTFTTHMPSASTEQPTATSRGGPTATSVTQGTHTT). Residues 2070–2080 (TGAQTQTTFTT) show a composition bias toward low complexity. Positions 2081-2110 (HMPSASTEQPTATSRGGPTATSVTQGTHTT) are enriched in polar residues. The stretch at 2116 to 2220 (CHPRCTWTTW…VLCCETPKGC (105 aa)) is one Cys-rich subdomain 5 repeat. A C-linked (Man) tryptophan glycan is attached at tryptophan 2122. The segment covering 2224-2234 (STPVTAPSTPS) has biased composition (low complexity). Residues 2224–3214 (STPVTAPSTP…SHVSISKTTH (991 aa)) are disordered. A compositionally biased stretch (polar residues) spans 2235-2249 (GRATSPTQSTSSWQK). Low complexity-rich tracts occupy residues 2250-3184 (SRTT…TPGP) and 3192-3214 (PTTSTASVSKTSTSHVSISKTTH). The interval 2257–3200 (TTSTTSTPQT…VPTTSTASVS (944 aa)) is 107 X 8 AA approximate tandem repeats of T-T-S-T-T-S-A-P. O-linked (GalNAc) threonine glycans are attached at residues threonine 2395, threonine 2405, threonine 2451, threonine 2461, threonine 2531, threonine 2541, threonine 2571, threonine 2581, threonine 2699, threonine 2709, threonine 2883, threonine 2893, threonine 2979, threonine 2989, threonine 3067, and threonine 3077. A Cys-rich subdomain 6 repeat occupies 3222 to 3326 (CHLRCTWTKW…VLCCETPKGC (105 aa)). Tryptophan 3228 carries C-linked (Man) tryptophan glycosylation. Positions 3329-3340 (TSTPVTAPSTPS) are enriched in low complexity. The disordered stretch occupies residues 3329-3515 (TSTPVTAPST…SVSKTTHSQP (187 aa)). Polar residues predominate over residues 3341-3355 (GRATSPTQSTSSWQK). Residues 3356–3513 (SRTTTLVTTS…HVSVSKTTHS (158 aa)) are compositionally biased toward low complexity. Residues 3363–3498 (TTSTTSTPQT…VTTTSTASVS (136 aa)) form a 17 X 8 AA approximate tandem repeats of T-T-S-T-T-S-A-P region. The stretch at 3520-3660 (CHPRCTWTKW…WQKSRTTTLV (141 aa)) is one Cys-rich subdomain 7 repeat. The C-linked (Man) tryptophan glycan is linked to tryptophan 3526. The span at 3628–3638 (STSVTAPSTPS) shows a compositional bias: low complexity. Residues 3628–3951 (STSVTAPSTP…KTTHSQPVTR (324 aa)) are disordered. Residues 3639–3660 (GRATSPTQSTSSWQKSRTTTLV) show a composition bias toward polar residues. Residues 3661-3931 (TSSITSTTQT…VPTTSTASVS (271 aa)) form a 34 X 8 AA approximate tandem repeats of T-T-S-T-T-S-A-P region. Residues 3661 to 3946 (TSSITSTTQT…HVSVSKTTHS (286 aa)) are compositionally biased toward low complexity. Asparagine 3774 is a glycosylation site (N-linked (GlcNAc...) asparagine). A Cys-rich subdomain 8 repeat occupies 3953-4057 (CHPRCTWTKW…VLCCETPKGC (105 aa)). The C-linked (Man) tryptophan glycan is linked to tryptophan 3959. Over residues 4060–4071 (TSTPVTAPSTPS) the composition is skewed to low complexity. A disordered region spans residues 4060 to 4625 (TSTPVTAPST…KTTHSQPVTS (566 aa)). The segment covering 4072-4088 (GRATSPTQSTSSWQKSR) has biased composition (polar residues). The segment covering 4089–4610 (TTTLVTTSTT…TTPVSKTSTS (522 aa)) has biased composition (low complexity). The segment at 4093 to 4595 (VTTSTTSTPQ…TSGPGTTPSP (503 aa)) is 58 X 8 AA approximate tandem repeats of T-T-S-T-T-S-A-P. O-linked (GalNAc) threonine glycosylation is found at threonine 4224, threonine 4234, threonine 4296, threonine 4306, threonine 4320, threonine 4330, threonine 4376, threonine 4386, threonine 4440, threonine 4450, threonine 4480, threonine 4490, threonine 4512, threonine 4522, threonine 4568, and threonine 4578. Residues 4611–4624 (HLSVSKTTHSQPVT) show a composition bias toward polar residues. One copy of the Cys-rich subdomain 9 repeat lies at 4627-4731 (CHPLCAWTKW…VLCCETPRGC (105 aa)). The C-linked (Man) tryptophan glycan is linked to tryptophan 4633. Residues 4830-4849 (TLPPAPATSPSISTSEPVTE) form a disordered region. The VWFC 2 domain occupies 4852–4918 (CPNAVPPRKK…DGCCHHYQCQ (67 aa)). N-linked (GlcNAc...) asparagine glycosylation is found at asparagine 4869 and asparagine 4942. The VWFD 4 domain occupies 4919–5103 (CVCSGWGDPH…VSIPDQPACH (185 aa)). Cystine bridges form between cysteine 4921–cysteine 5063, cysteine 4943–cysteine 5102, and cysteine 4967–cysteine 4975. 3 N-linked (GlcNAc...) asparagine glycosylation sites follow: asparagine 5057, asparagine 5093, and asparagine 5236. Positions 5276–5345 (PRCLGPHGEP…GQCCPQYSCA (70 aa)) constitute a VWFC 3 domain. Asparagine 5347, asparagine 5377, asparagine 5386, asparagine 5455, and asparagine 5528 each carry an N-linked (GlcNAc...) asparagine glycan. Positions 5381–5448 (TVCSINGTLY…QSGQCCGTCV (68 aa)) constitute a VWFC 4 domain. 4 cysteine pairs are disulfide-bonded: cysteine 5532–cysteine 5582, cysteine 5546–cysteine 5596, cysteine 5557–cysteine 5612, and cysteine 5561–cysteine 5614. The CTCK domain occupies 5532-5620 (CAVYHRSLII…ECGCMGRRCP (89 aa)). The N-linked (GlcNAc...) asparagine glycan is linked to asparagine 5591. Residues 5622 to 5654 (PGDTQHSEEAEPEPSQEAESGSWERGVPVSPMH) form a disordered region.

As to quaternary structure, homomultimer; disulfide-linked. The N- and C-terminus mediate their assembly into higher order structures to form filaments. The CTCK domains of two polypeptides associate in the endoplasmic reticulum to generate intermolecularly disulfide-bonded dimers. These dimers progress to the Golgi apparatus, which is a more acidic environment than the endoplasmic reticulum. Under acidic conditions, the N-termini form non-covalent intermolecular interactions that juxtapose assemblies from different CTCK-linked dimers to produce long, disulfide-linked polymers that remain highly compact until secretion. In terms of processing, C-, O- and N-glycosylated. O-glycosylated on the second and last Thr of the Thr-/Ser-rich tandem repeats TTPSPVPTTSTTSA. One form of glycosylation is also known as Lewis B (LeB) blood group antigen, a tetrasaccharide consisting of N-acetylglucosamine having a fucosyl residue attached. It has a role as an epitope and antigen and functions as a receptor for H.pylori binding and facilitates infection. C-mannosylation in the Cys-rich subdomains may be required for proper folding of these regions and for export from the endoplasmic reticulum during biosynthesis. Post-translationally, proteolytic cleavage in the C-terminal is initiated early in the secretory pathway and does not involve a serine protease. The extent of cleavage is increased in the acidic parts of the secretory pathway. Cleavage generates a reactive group which could link the protein to a primary amide. As to expression, highly expressed in surface mucosal cells of respiratory tract and stomach epithelia. Overexpressed in a number of carcinomas. Also expressed in Barrett's esophagus epithelium and in the proximal duodenum.

It localises to the secreted. Gel-forming glycoprotein of gastric and respiratory tract epithelia that protects the mucosa from infection and chemical damage by binding to inhaled microorganisms and particles that are subsequently removed by the mucociliary system. Interacts with H.pylori in the gastric epithelium, Barrett's esophagus as well as in gastric metaplasia of the duodenum (GMD). This Homo sapiens (Human) protein is Mucin-5AC.